We begin with the raw amino-acid sequence, 51 residues long: Large ribosomal subunit protein bL33 (51 aa).

Belongs to the bacterial ribosomal protein bL33 family.

The chain is Large ribosomal subunit protein bL33 from Pseudomonas putida (strain ATCC 47054 / DSM 6125 / CFBP 8728 / NCIMB 11950 / KT2440).